Consider the following 31-residue polypeptide: Antifungal protein 1 (31 aa).

The protein resides in the secreted. Antifungal activity against C.albicans ATCC 76615. The chain is Antifungal protein 1 from Musca domestica (House fly).